A 391-amino-acid polypeptide reads, in one-letter code: Outer membrane protein 41 (391 aa).

An N-terminal signal peptide occupies residues 1–20; that stretch reads MKVKYLMLTLVGAIALNASA. Q21 bears the Pyrrolidone carboxylic acid mark. The region spanning 282 to 391 is the OmpA-like domain; it reads TKTENILTEK…WNRVVIVRSK (110 aa).

The protein belongs to the outer membrane OOP (TC 1.B.6) superfamily. As to quaternary structure, disulfide-linked heterodimer with Omp40.

It is found in the cell outer membrane. May have porin activity and function in peptidoglycan binding. The sequence is that of Outer membrane protein 41 from Porphyromonas gingivalis (strain ATCC BAA-308 / W83).